A 429-amino-acid polypeptide reads, in one-letter code: Trigger factor (429 aa).

The PPIase FKBP-type domain occupies G164–P249.

Belongs to the FKBP-type PPIase family. Tig subfamily.

The protein resides in the cytoplasm. The catalysed reaction is [protein]-peptidylproline (omega=180) = [protein]-peptidylproline (omega=0). Its function is as follows. Involved in protein export. Acts as a chaperone by maintaining the newly synthesized protein in an open conformation. Functions as a peptidyl-prolyl cis-trans isomerase. The polypeptide is Trigger factor (Lysinibacillus sphaericus (strain C3-41)).